Reading from the N-terminus, the 363-residue chain is Cysteine proteinase 15A (363 aa).

The N-terminal stretch at 1-18 (MDRRFLFALFLFAAVATA) is a signal peptide. A propeptide spans 19-131 (VTDDTNNDDF…QKAPILPTTN (113 aa)) (activation peptide). Intrachain disulfides connect Cys153/Cys203 and Cys187/Cys236. Cys156 is an active-site residue. Asn249 carries N-linked (GlcNAc...) asparagine glycosylation. A disulfide bridge connects residues Cys292 and Cys347. Catalysis depends on residues His299 and Asn326.

The protein belongs to the peptidase C1 family.

The chain is Cysteine proteinase 15A from Pisum sativum (Garden pea).